Consider the following 442-residue polypeptide: tRNA-2-methylthio-N(6)-dimethylallyladenosine synthase (442 aa).

Residues 3-118 (KKVFIKTFGC…LPELLNARAA (116 aa)) enclose the MTTase N-terminal domain. 6 residues coordinate [4Fe-4S] cluster: C12, C49, C81, C155, C159, and C162. Positions 141–374 (RVEGSSAFVS…QAVINNNIKD (234 aa)) constitute a Radical SAM core domain. The TRAM domain occupies 377-440 (DERVGTVQRL…TFTLRGEVVV (64 aa)).

The protein belongs to the methylthiotransferase family. MiaB subfamily. In terms of assembly, monomer. It depends on [4Fe-4S] cluster as a cofactor.

The protein localises to the cytoplasm. The catalysed reaction is N(6)-dimethylallyladenosine(37) in tRNA + (sulfur carrier)-SH + AH2 + 2 S-adenosyl-L-methionine = 2-methylsulfanyl-N(6)-dimethylallyladenosine(37) in tRNA + (sulfur carrier)-H + 5'-deoxyadenosine + L-methionine + A + S-adenosyl-L-homocysteine + 2 H(+). Its function is as follows. Catalyzes the methylthiolation of N6-(dimethylallyl)adenosine (i(6)A), leading to the formation of 2-methylthio-N6-(dimethylallyl)adenosine (ms(2)i(6)A) at position 37 in tRNAs that read codons beginning with uridine. The sequence is that of tRNA-2-methylthio-N(6)-dimethylallyladenosine synthase from Delftia acidovorans (strain DSM 14801 / SPH-1).